Consider the following 218-residue polypeptide: Sec-independent protein translocase protein TatB (218 aa).

The helical transmembrane segment at 1-21 (MFDIGFSELLLVLVIGLVVLG) threads the bilayer. Disordered stretches follow at residues 126-145 (AESATKAQASPQAPATDVDK) and 174-218 (SSVD…GGDR). The span at 199–218 (HSTDSHGADQPRTHQPGGDR) shows a compositional bias: basic and acidic residues.

This sequence belongs to the TatB family. In terms of assembly, the Tat system comprises two distinct complexes: a TatABC complex, containing multiple copies of TatA, TatB and TatC subunits, and a separate TatA complex, containing only TatA subunits. Substrates initially bind to the TatABC complex, which probably triggers association of the separate TatA complex to form the active translocon.

It is found in the cell inner membrane. In terms of biological role, part of the twin-arginine translocation (Tat) system that transports large folded proteins containing a characteristic twin-arginine motif in their signal peptide across membranes. Together with TatC, TatB is part of a receptor directly interacting with Tat signal peptides. TatB may form an oligomeric binding site that transiently accommodates folded Tat precursor proteins before their translocation. This is Sec-independent protein translocase protein TatB from Yersinia enterocolitica serotype O:8 / biotype 1B (strain NCTC 13174 / 8081).